The chain runs to 314 residues: Olfactory receptor 10A6 (314 aa).

The Extracellular segment spans residues 1 to 25; it reads MERQNQSCVVEFILLGFSNYPELQG. The N-linked (GlcNAc...) asparagine glycan is linked to Asn-5. A helical membrane pass occupies residues 26 to 46; the sequence is QLFVAFLVIYLVTLIGNAIII. Over 47-54 the chain is Cytoplasmic; that stretch reads VIVSLDQS. Residues 55 to 75 traverse the membrane as a helical segment; that stretch reads LHVPMYLFLLNLSVVDLSFSA. The Extracellular segment spans residues 76-99; the sequence is VIMPEMLVVLSTEKTTISFGGCFA. Residues Cys-97 and Cys-189 are joined by a disulfide bond. A helical transmembrane segment spans residues 100–120; the sequence is QMYFILLFGGAECFLLGAMAY. At 121–139 the chain is on the cytoplasmic side; the sequence is DRFAAICHPLNYQMIMNKG. A helical membrane pass occupies residues 140–160; sequence VFMKLIIFSWALGFMLGTVQT. Residues 161-197 are Extracellular-facing; sequence SWVSSFPFCGLNEINHISCETPAVLELACADTFLFEI. A helical membrane pass occupies residues 198–217; that stretch reads YAFTGTFLIILVPFLLILLS. The Cytoplasmic segment spans residues 218–237; that stretch reads YIRVLFAILKMPSTTGRQKA. Residues 238-258 traverse the membrane as a helical segment; it reads FSTCAAHLTSVTLFYGTASMT. Residues 259 to 271 lie on the Extracellular side of the membrane; sequence YLQPKSGYSPETK. The helical transmembrane segment at 272-292 threads the bilayer; sequence KVMSLSYSLLTPLLNLLIYSL. At 293–314 the chain is on the cytoplasmic side; sequence RNSEMKRALMKLWRRRVVLHTI.

This sequence belongs to the G-protein coupled receptor 1 family.

It is found in the cell membrane. Functionally, odorant receptor. The protein is Olfactory receptor 10A6 (OR10A6) of Homo sapiens (Human).